Consider the following 680-residue polypeptide: Putative cyclin-dependent serine/threonine-protein kinase DDB_G0272797/DDB_G0274007 (680 aa).

A Protein kinase domain is found at 4-381 (YIILSKCGQG…SLEALEHPWF (378 aa)). ATP is bound by residues 10–18 (CGQGTYGSV) and K33. D125 serves as the catalytic Proton acceptor. Disordered regions lie at residues 243–299 (QQQQ…LQSP), 409–444 (RQLQQQQHHHQQQQQQQQQQQQQQQPHQQQLIQRQH), 483–507 (LAQHQQYNSQQHQQHHQQQHQQHQQ), and 597–680 (QQQQ…KSNG). A compositionally biased stretch (low complexity) spans 257 to 286 (NNNNNNNNNNNNNNNNNNNNNNNNNNNNNN). Polar residues predominate over residues 287–297 (KYNNISTSCLQ). Low complexity-rich tracts occupy residues 410–444 (QLQQQQHHHQQQQQQQQQQQQQQQPHQQQLIQRQH), 483–494 (LAQHQQYNSQQH), and 597–616 (QQQQHQYQPPQQYNHQPPQH). Residues 617 to 631 (QHQHQHQHQHQHQHQ) are compositionally biased toward basic residues. Residues 632–642 (HQPQPQHQHQP) are compositionally biased toward low complexity. Over residues 643 to 655 (QPQPQPTPTPTPT) the composition is skewed to pro residues. A compositionally biased stretch (low complexity) spans 656 to 680 (STPTTTTIPPTITTTIQPTISKSNG).

This sequence belongs to the protein kinase superfamily. CMGC Ser/Thr protein kinase family. CDC2/CDKX subfamily.

The catalysed reaction is L-seryl-[protein] + ATP = O-phospho-L-seryl-[protein] + ADP + H(+). It carries out the reaction L-threonyl-[protein] + ATP = O-phospho-L-threonyl-[protein] + ADP + H(+). In Dictyostelium discoideum (Social amoeba), this protein is Putative cyclin-dependent serine/threonine-protein kinase DDB_G0272797/DDB_G0274007.